The sequence spans 193 residues: dCTP deaminase (193 aa).

DCTP contacts are provided by residues 110–115 (RSSLAR), D128, 136–138 (VLE), Y171, K178, and Q182. E138 (proton donor/acceptor) is an active-site residue. Positions 169-193 (RPYNSRQDAKYRGQQGAVASRIDKD) are disordered.

This sequence belongs to the dCTP deaminase family. In terms of assembly, homotrimer.

The enzyme catalyses dCTP + H2O + H(+) = dUTP + NH4(+). Its pathway is pyrimidine metabolism; dUMP biosynthesis; dUMP from dCTP (dUTP route): step 1/2. Catalyzes the deamination of dCTP to dUTP. The polypeptide is dCTP deaminase (Yersinia pestis bv. Antiqua (strain Antiqua)).